A 156-amino-acid chain; its full sequence is MLHVKTIEGQFDAKGLKFAIIATRFNDFIVDRLVGGAVDYLARHGCEREDMTIVRIPGAFEMPIVAQKLAKSGRYHGIIALGAVIRGATPHFDFVAGEATKGLAHISLDSGVPVGFGLLTTDSIEQAIERAGTKAGNKGVEAAAAVLETVRVMEQL.

Residues F25, 59 to 61 (AFE), and 83 to 85 (AVI) contribute to the 5-amino-6-(D-ribitylamino)uracil site. 88-89 (AT) serves as a coordination point for (2S)-2-hydroxy-3-oxobutyl phosphate. The Proton donor role is filled by H91. A 5-amino-6-(D-ribitylamino)uracil-binding site is contributed by F116. R130 provides a ligand contact to (2S)-2-hydroxy-3-oxobutyl phosphate.

The protein belongs to the DMRL synthase family.

The catalysed reaction is (2S)-2-hydroxy-3-oxobutyl phosphate + 5-amino-6-(D-ribitylamino)uracil = 6,7-dimethyl-8-(1-D-ribityl)lumazine + phosphate + 2 H2O + H(+). It participates in cofactor biosynthesis; riboflavin biosynthesis; riboflavin from 2-hydroxy-3-oxobutyl phosphate and 5-amino-6-(D-ribitylamino)uracil: step 1/2. Its function is as follows. Catalyzes the formation of 6,7-dimethyl-8-ribityllumazine by condensation of 5-amino-6-(D-ribitylamino)uracil with 3,4-dihydroxy-2-butanone 4-phosphate. This is the penultimate step in the biosynthesis of riboflavin. This Nitratidesulfovibrio vulgaris (strain DSM 19637 / Miyazaki F) (Desulfovibrio vulgaris) protein is 6,7-dimethyl-8-ribityllumazine synthase.